A 1400-amino-acid polypeptide reads, in one-letter code: DNA-directed RNA polymerase subunit beta' (1400 aa).

Cysteine 71, cysteine 73, cysteine 86, and cysteine 89 together coordinate Zn(2+). Mg(2+) contacts are provided by aspartate 462, aspartate 464, and aspartate 466. The Zn(2+) site is built by cysteine 811, cysteine 885, cysteine 892, and cysteine 895.

It belongs to the RNA polymerase beta' chain family. The RNAP catalytic core consists of 2 alpha, 1 beta, 1 beta' and 1 omega subunit. When a sigma factor is associated with the core the holoenzyme is formed, which can initiate transcription. Mg(2+) serves as cofactor. Zn(2+) is required as a cofactor.

The enzyme catalyses RNA(n) + a ribonucleoside 5'-triphosphate = RNA(n+1) + diphosphate. DNA-dependent RNA polymerase catalyzes the transcription of DNA into RNA using the four ribonucleoside triphosphates as substrates. This is DNA-directed RNA polymerase subunit beta' from Brucella anthropi (strain ATCC 49188 / DSM 6882 / CCUG 24695 / JCM 21032 / LMG 3331 / NBRC 15819 / NCTC 12168 / Alc 37) (Ochrobactrum anthropi).